Reading from the N-terminus, the 213-residue chain is Virion protein US10 homolog (213 aa).

The protein belongs to the herpesviridae US10 family. In terms of processing, phosphorylated.

It is found in the virion tegument. Its subcellular location is the host nucleus matrix. This is Virion protein US10 homolog (US639) from Gallid herpesvirus 2 (strain GA) (GaHV-2).